Reading from the N-terminus, the 23-residue chain is Conotoxin Cl6c (23 aa).

Intrachain disulfides connect C2-C12, C5-C17, and C11-C21.

In terms of tissue distribution, expressed by the venom duct.

The protein localises to the secreted. The chain is Conotoxin Cl6c from Californiconus californicus (California cone).